A 279-amino-acid polypeptide reads, in one-letter code: Calcium-binding protein 4 (279 aa).

Basic and acidic residues predominate over residues 1-12 (MAEEQGRGRHGP). The disordered stretch occupies residues 1–114 (MAEEQGRGRH…PGPQHDAAQR (114 aa)). A Phosphoserine modification is found at serine 42. Positions 55-65 (GPSSSGEQTPM) are enriched in polar residues. 4 consecutive EF-hand domains span residues 133-168 (EELDELQAAFEEFDTDHDGYIGYRDLGECMRTLGYM), 187-204 (GRVDFEEFVEMMGPKLRE), 210-245 (LGLRELRIAFREFDRDRDGRITVAELREAAPALLGE), and 247-279 (LVGPELEEMLQEVDLNGDGTVDFNEFVMMLSRH). Residues aspartate 146, aspartate 148, aspartate 150, tyrosine 152, and aspartate 157 each coordinate Ca(2+). Residues aspartate 223, aspartate 225, aspartate 227, arginine 229, glutamate 234, aspartate 260, asparagine 262, aspartate 264, threonine 266, and glutamate 271 each coordinate Ca(2+).

As to quaternary structure, interacts with CACNA1F and CACNA1D (via IQ domain) in a calcium independent manner. Interacts (via N-terminus) with UNC119. Post-translationally, phosphorylated. Phosphorylation levels change with the light conditions and regulate the activity. In terms of tissue distribution, expressed in the retina.

It localises to the cytoplasm. It is found in the presynapse. Its function is as follows. May play a role in normal synaptic function, probably through regulation of Ca(2+) influx and neurotransmitter release in photoreceptor synaptic terminals and in auditory transmission. Modulator of CACNA1F, shifting the activation range to more hyperpolarized voltages. This chain is Calcium-binding protein 4 (CABP4), found in Bos taurus (Bovine).